The sequence spans 482 residues: F-box/LRR-repeat protein At3g58930 (482 aa).

The region spanning 1–47 is the F-box domain; that stretch reads MDRVSNLPDGVRGHILSFLPAKHIALTSVLSKSWLNLWKLIPILDID. LRR repeat units follow at residues 122–150, 175–200, 222–248, 313–344, and 345–370; these read SYED…KIRN, SDLI…RMAS, GTGC…NYSD, ILYL…GIKS, and EEGR…IIEG.

The protein is F-box/LRR-repeat protein At3g58930 of Arabidopsis thaliana (Mouse-ear cress).